Here is a 1258-residue protein sequence, read N- to C-terminus: Cohesin subunit SA-1 (1258 aa).

The disordered stretch occupies residues 1–59 (MITSELPVLQDSTNETTAHSDAGSELEETEVKGKRKRGRPGRPPSTNKKPRKSPGEKSR). Residues 10–19 (QDSTNETTAH) show a composition bias toward polar residues. S24 bears the Phosphoserine mark. Positions 296–381 (FVHRYRDAIA…NRFKDRIVSM (86 aa)) constitute an SCD domain. 3 positions are modified to phosphoserine: S756, S1062, and S1065. The disordered stretch occupies residues 1055–1148 (GGEDDRMSVN…EHGSEPDFLH (94 aa)). Low complexity predominate over residues 1062–1075 (SVNSGSSSSKTSSV). Basic residues predominate over residues 1076–1087 (RSKKGRPPLHRK). A Phosphoserine modification is found at S1093. A compositionally biased stretch (polar residues) spans 1095–1106 (DNTWLNRTDTMI). Positions 1137 to 1146 (ESEHGSEPDF) are enriched in basic and acidic residues. Residue K1161 forms a Glycyl lysine isopeptide (Lys-Gly) (interchain with G-Cter in SUMO2) linkage.

It belongs to the SCC3 family. Cohesin complexes are composed of a heterodimer between a SMC1 protein (SMC1A or SMC1B) and SMC3, which are attached via their hinge domain, and RAD21 which link them at their heads, and one STAG protein (STAG1, STAG2 or STAG3). In cohesin complexes, STAG1 is mutually exclusive with STAG2 and STAG3. Interacts directly with RAD21 in cohesin complex. The cohesin complex interacts with the cohesin loading complex subunits NIPBL/Scc2 (via HEAT repeats) and MAU2/Scc4. NIPBL directly contacts all members of the complex, RAD21, SMC1A/B, SMC3 and STAG1. In terms of processing, phosphorylated by PLK1. The large dissociation of cohesin from chromosome arms during prophase is partly due to its phosphorylation.

It localises to the nucleus. The protein localises to the chromosome. Its function is as follows. Component of cohesin complex, a complex required for the cohesion of sister chromatids after DNA replication. The cohesin complex apparently forms a large proteinaceous ring within which sister chromatids can be trapped. At anaphase, the complex is cleaved and dissociates from chromatin, allowing sister chromatids to segregate. The cohesin complex may also play a role in spindle pole assembly during mitosis. In Mus musculus (Mouse), this protein is Cohesin subunit SA-1 (Stag1).